Reading from the N-terminus, the 377-residue chain is Chaperone protein DnaJ (377 aa).

Positions 5 to 70 (DYYQVLGVSR…KKRSAYDQLG (66 aa)) constitute a J domain. The CR-type zinc-finger motif lies at 138–216 (GVTKIISFKT…CYGEGRYINT (79 aa)). The Zn(2+) site is built by Cys151, Cys154, Cys168, Cys171, Cys190, Cys193, Cys204, and Cys207. CXXCXGXG motif repeat units lie at residues 151 to 158 (CEACTGKG), 168 to 175 (CPTCRGSG), 190 to 197 (CQTCRGAG), and 204 to 211 (CTKCYGEG).

This sequence belongs to the DnaJ family. Homodimer. The cofactor is Zn(2+).

Its subcellular location is the cytoplasm. Its function is as follows. Participates actively in the response to hyperosmotic and heat shock by preventing the aggregation of stress-denatured proteins and by disaggregating proteins, also in an autonomous, DnaK-independent fashion. Unfolded proteins bind initially to DnaJ; upon interaction with the DnaJ-bound protein, DnaK hydrolyzes its bound ATP, resulting in the formation of a stable complex. GrpE releases ADP from DnaK; ATP binding to DnaK triggers the release of the substrate protein, thus completing the reaction cycle. Several rounds of ATP-dependent interactions between DnaJ, DnaK and GrpE are required for fully efficient folding. Also involved, together with DnaK and GrpE, in the DNA replication of plasmids through activation of initiation proteins. This chain is Chaperone protein DnaJ, found in Orientia tsutsugamushi (strain Ikeda) (Rickettsia tsutsugamushi).